The sequence spans 217 residues: Ribonuclease HII 2 (217 aa).

Residues 28-217 form the RNase H type-2 domain; sequence GLLAGVDEAG…VREVLLERRP (190 aa). A divalent metal cation contacts are provided by aspartate 34, glutamate 35, and aspartate 126.

The protein belongs to the RNase HII family. The cofactor is Mn(2+). Requires Mg(2+) as cofactor.

It is found in the cytoplasm. The catalysed reaction is Endonucleolytic cleavage to 5'-phosphomonoester.. Endonuclease that specifically degrades the RNA of RNA-DNA hybrids. This is Ribonuclease HII 2 from Methylibium petroleiphilum (strain ATCC BAA-1232 / LMG 22953 / PM1).